A 413-amino-acid polypeptide reads, in one-letter code: Argininosuccinate synthase (413 aa).

ATP is bound at residue 8–16; sequence AYSGGLDTS. Position 87 (Y87) interacts with L-citrulline. ATP is bound at residue G117. L-aspartate contacts are provided by T119, N123, and D124. An L-citrulline-binding site is contributed by N123. L-citrulline-binding residues include R127, S175, E259, and Y271.

Belongs to the argininosuccinate synthase family. Type 1 subfamily. In terms of assembly, homotetramer.

The protein localises to the cytoplasm. It carries out the reaction L-citrulline + L-aspartate + ATP = 2-(N(omega)-L-arginino)succinate + AMP + diphosphate + H(+). It participates in amino-acid biosynthesis; L-arginine biosynthesis; L-arginine from L-ornithine and carbamoyl phosphate: step 2/3. The polypeptide is Argininosuccinate synthase (Micrococcus luteus (strain ATCC 4698 / DSM 20030 / JCM 1464 / CCM 169 / CCUG 5858 / IAM 1056 / NBRC 3333 / NCIMB 9278 / NCTC 2665 / VKM Ac-2230) (Micrococcus lysodeikticus)).